Consider the following 955-residue polypeptide: E3 ubiquitin-protein ligase MIB2 (955 aa).

At methionine 1 the chain carries N-acetylmethionine. Residues 1–80 (MDPDPQAGVQ…AHDLLLYDNA (80 aa)) form the MIB/HERC2 1 domain. The ZZ-type zinc finger occupies 86–138 (HPNIICDCCKKHGLRGMRWKCRVCLDYDLCTQCYMHNKHELAHAFDRYETAHS). Residues cysteine 91, cysteine 94, cysteine 106, cysteine 109, cysteine 115, cysteine 118, histidine 124, and histidine 128 each coordinate Zn(2+). The MIB/HERC2 2 domain occupies 149–227 (LPRIPLRGIF…KVDLKCVGEA (79 aa)). Serine 251 is subject to Phosphoserine. ANK repeat units lie at residues 464-493 (QGRTALQVAAYLGQVELIRLLLQARAGVDL), 497-526 (EGNTALHYAALGNQPEATRVLLSAGCRADA), 530-559 (TQSTALHVAVQRGFLEVVRALCERGCDVNL), 563-595 (HSDTPLHSAISAGTGASGIVEVLTEVPNIDVTA), 599-628 (QGFTLLHHASLKGHALAVRKILARARQLVD), 633-663 (DGFTALHLAALNNHREVAQILIREGRCDVNV), 667-696 (KLQSPLHLAVQQAHVGLVPLLVDAGCSVNA), 700-728 (EGDTALHVALQRHQLLPLVADGAGGDPGP), and 769-798 (RGRSPLDLAAEGRVLKALQGCAQRFRERQA). 2 consecutive RING-type zinc fingers follow at residues 832 to 867 (CLVCSELALLVLFSPCQHRTVCEECARRMKKCIRCQ) and 911 to 944 (CPICIDSHIRLVFQCGHGACAPCGSALSACPICR).

Interacts with actin monomer. In terms of processing, ubiquitinated. Possibly via autoubiquitination. As to expression, expressed in skeletal muscle, and to a lesser extent in heart, brain and kidney.

It localises to the cytoplasm. Its subcellular location is the endosome. The catalysed reaction is S-ubiquitinyl-[E2 ubiquitin-conjugating enzyme]-L-cysteine + [acceptor protein]-L-lysine = [E2 ubiquitin-conjugating enzyme]-L-cysteine + N(6)-ubiquitinyl-[acceptor protein]-L-lysine.. Its pathway is protein modification; protein ubiquitination. Its function is as follows. E3 ubiquitin-protein ligase that mediates ubiquitination of Delta receptors, which act as ligands of Notch proteins. Positively regulates the Delta-mediated Notch signaling by ubiquitinating the intracellular domain of Delta, leading to endocytosis of Delta receptors. This Homo sapiens (Human) protein is E3 ubiquitin-protein ligase MIB2.